We begin with the raw amino-acid sequence, 151 residues long: Transcriptional repressor NrdR (151 aa).

A zinc finger lies at 3–34; sequence CPYCGYEETRVLDSRVDSSGMTVRRRRECVKC. The ATP-cone domain maps to 49–139; that stretch reads VFVVKKDGKR…VYKDFREIDQ (91 aa).

This sequence belongs to the NrdR family. It depends on Zn(2+) as a cofactor.

In terms of biological role, negatively regulates transcription of bacterial ribonucleotide reductase nrd genes and operons by binding to NrdR-boxes. The sequence is that of Transcriptional repressor NrdR from Thermosipho melanesiensis (strain DSM 12029 / CIP 104789 / BI429).